The chain runs to 342 residues: Peptide chain release factor 1 (342 aa).

An N5-methylglutamine modification is found at glutamine 211. The tract at residues 262 to 282 is disordered; that stretch reads KEREISQKRKSQIGTGERSEK.

The protein belongs to the prokaryotic/mitochondrial release factor family. Post-translationally, methylated by PrmC. Methylation increases the termination efficiency of RF1.

It localises to the cytoplasm. Its function is as follows. Peptide chain release factor 1 directs the termination of translation in response to the peptide chain termination codons UAG and UAA. This Thermotoga maritima (strain ATCC 43589 / DSM 3109 / JCM 10099 / NBRC 100826 / MSB8) protein is Peptide chain release factor 1 (prfA).